The primary structure comprises 363 residues: F-box protein At3g44326 (363 aa).

The segment at 1–23 is disordered; that stretch reads MLSSSSSSTVEQPSRGGSPGINA. In terms of domain architecture, F-box spans 27–66; the sequence is DVLRSNILTRLDGSSLAALSCTCSNLNSFCSDESLWRQQC.

This is F-box protein At3g44326 from Arabidopsis thaliana (Mouse-ear cress).